A 308-amino-acid chain; its full sequence is MAEPILHIEGLDKKIGSKQILKQISMDVMEGEIIGLLGPNGSGKTTLIRIIVGLLKQNSGSVTISGFQHDTEFEKAMEAVGAIVENPEFYPYLTGWENLKHFANMHKKIADERLDEVVERVGLTSAIHDKVKTYSLGMRQRLGIAQAILHRPKLLILDEPTNGLDPAGMKDFRDHIKELAEMEGTAVLFATHLLREVEDLCDRVIIIQKGEIKAEVSLQGTDQTTEKAIIEVQPQEKALNWLTGNQYQAESQDGTIVVEVAKENIPELNRSLVGQDLNVFSITPYTQSLEDEFIKATTAHQEEGEELV.

Residues 6–234 (LHIEGLDKKI…TEKAIIEVQP (229 aa)) enclose the ABC transporter domain. 38-45 (GPNGSGKT) serves as a coordination point for ATP.

It belongs to the ABC transporter superfamily.

This is an uncharacterized protein from Bacillus subtilis (strain 168).